Reading from the N-terminus, the 370-residue chain is TD and POZ domain-containing protein 4 (370 aa).

The 131-residue stretch at lysine 19–valine 149 folds into the MATH domain. A BTB domain is found at threonine 188–valine 251.

It belongs to the Tdpoz family.

The sequence is that of TD and POZ domain-containing protein 4 from Mus musculus (Mouse).